The primary structure comprises 128 residues: Iron-sulfur cluster insertion protein ErpA (128 aa).

Iron-sulfur cluster is bound by residues cysteine 56, cysteine 120, and cysteine 122.

It belongs to the HesB/IscA family. In terms of assembly, homodimer. Iron-sulfur cluster serves as cofactor.

Required for insertion of 4Fe-4S clusters for at least IspG. This is Iron-sulfur cluster insertion protein ErpA from Xanthomonas axonopodis pv. citri (strain 306).